We begin with the raw amino-acid sequence, 351 residues long: MHFAYILILLILTPRVDSSWWYIGALGARVICDNIPGLVNKQRQLCQKHPDIMQAIGEGAKEWIRECQHQFRHHRWNCSTLDRDHTVFGRVMLRSSRETAFVYAISYAGVVYAITRACSQGELKSCNCDPKKRGRSKDERGEFDWGGCSDHIDFGIKFPKDFVDAKEKRLKDARALMNLHNNRCGRMAVKRFMNLECKCHGVSGSCTLRTCWRAMSDFRKTGDFLRRRYNGAIQVTMNQDGSGFAVANQNFRKATKKDLVYFENSPDYCVMDKTAGSLGTAGRVCDKVSRGTDGCEVMCCGRGYDTTRVTRITKCECKFHWCCAVRCKECEETVDVHTCKAPKRAEWLDQT.

A signal peptide spans methionine 1 to valine 16. Intrachain disulfides connect cysteine 67–cysteine 78, cysteine 118–cysteine 126, cysteine 128–cysteine 148, cysteine 197–cysteine 211, cysteine 199–cysteine 206, cysteine 269–cysteine 300, cysteine 285–cysteine 295, cysteine 299–cysteine 339, cysteine 315–cysteine 330, cysteine 317–cysteine 327, and cysteine 322–cysteine 323. Asparagine 77 carries an N-linked (GlcNAc...) asparagine glycan. Serine 203 carries the O-palmitoleoyl serine; by PORCN lipid modification.

The protein belongs to the Wnt family. In terms of processing, palmitoleoylation is required for efficient binding to frizzled receptors. Depalmitoleoylation leads to Wnt signaling pathway inhibition. In terms of tissue distribution, expressed maternally in both vegetal and animal blastomeres with enrichment in the animal hemisphere. Expressed zygotically near the prosencephalic-mesencephalic boundary of the developing brain in neurula and tailbud stages, and also in non-brain areas at tadpole stages.

It is found in the secreted. The protein resides in the extracellular space. The protein localises to the extracellular matrix. In terms of biological role, ligand for members of the frizzled family of seven transmembrane receptors. Functions in the canonical Wnt/beta-catenin signaling pathway. The chain is Protein Wnt-2b-A (wnt2b-a) from Xenopus laevis (African clawed frog).